The sequence spans 95 residues: Sec-independent protein translocase protein TatA (95 aa).

The helical transmembrane segment at 1 to 21 threads the bilayer; it reads MGSMSVWHWVIVAVVVMLLFG. Residues 42–95 are disordered; sequence GMADDETQPNTATSVPPVGPNDPVRTLPHQGAPGTAPQPPHVQPHVSAGDHKAV.

This sequence belongs to the TatA/E family. As to quaternary structure, the Tat system comprises two distinct complexes: a TatABC complex, containing multiple copies of TatA, TatB and TatC subunits, and a separate TatA complex, containing only TatA subunits. Substrates initially bind to the TatABC complex, which probably triggers association of the separate TatA complex to form the active translocon.

It is found in the cell inner membrane. Functionally, part of the twin-arginine translocation (Tat) system that transports large folded proteins containing a characteristic twin-arginine motif in their signal peptide across membranes. TatA could form the protein-conducting channel of the Tat system. The polypeptide is Sec-independent protein translocase protein TatA (Methylorubrum extorquens (strain CM4 / NCIMB 13688) (Methylobacterium extorquens)).